Here is a 594-residue protein sequence, read N- to C-terminus: E3 ubiquitin-protein ligase TRAF7 (594 aa).

A disordered region spans residues 1-33; that stretch reads MPPINTPRRSDSAISVRSLHSESSMSLRSTFSL. Phosphoserine occurs at positions 12 and 15. Positions 15–29 are enriched in low complexity; it reads SVRSLHSESSMSLRS. An RING-type zinc finger spans residues 55 to 89; that stretch reads CQLCCSVFKDPVITTCGHTFCRRCALKSEKCPVDN. The segment at 146–216 adopts a TRAF-type zinc-finger fold; the sequence is HESSCDYRPV…RFEGLKEFLQ (71 aa). 7 WD repeats span residues 318–357, 361–398, 401–437, 439–478, 481–518, 521–562, and 565–593; these read GHQG…KCQK, GHDG…KVNT, AHDN…LKLK, ELTG…CIHV, TSGG…QVRT, GHVG…CTQT, and RHQG…KVWT.

Belongs to the WD repeat TRAF7 family. In terms of assembly, homodimer. Interacts with MAP3K3 and promotes the kinase activity of this enzyme. Post-translationally, phosphorylated by MAP3K3. In terms of processing, ubiquitinates itself upon phosphorylation. As to expression, ubiquitously expressed. Expression is relatively high in heart, liver, kidney, testis, prostate, thyroid, and salivary gland.

The protein resides in the cytoplasmic vesicle. The protein localises to the cytoplasm. It is found in the nucleus. It carries out the reaction S-ubiquitinyl-[E2 ubiquitin-conjugating enzyme]-L-cysteine + [acceptor protein]-L-lysine = [E2 ubiquitin-conjugating enzyme]-L-cysteine + N(6)-ubiquitinyl-[acceptor protein]-L-lysine.. The protein operates within protein modification; protein ubiquitination. E3 ubiquitin and SUMO-protein ligase that plays a role in different biological processes such as innate immunity, inflammation or apoptosis. Potentiates MAP3K3-mediated activation of the NF-kappa-B, JUN/AP1 and DDIT3 transcriptional regulators. Negatively regulates MYB transcriptional activity by sequestering it to the cytosol via SUMOylation. Plays a role in the phosphorylation of MAPK1 and/or MAPK3, probably via its interaction with MAP3K3. Negatively regulates RLR-mediated innate immunity by promoting 'Lys-48'-linked ubiquitination of TBK1 through its RING domain to inhibit the cellular antiviral response. Promotes 'Lys-29'-linked polyubiquitination of NEMO/IKBKG and RELA leading to targeting these two proteins to lysosomal degradative pathways, reducing the transcriptional activity of NF-kappa-B. This chain is E3 ubiquitin-protein ligase TRAF7, found in Mus musculus (Mouse).